A 47-amino-acid chain; its full sequence is Large ribosomal subunit protein eL40 (47 aa).

The protein belongs to the eukaryotic ribosomal protein eL40 family.

In Methanocaldococcus jannaschii (strain ATCC 43067 / DSM 2661 / JAL-1 / JCM 10045 / NBRC 100440) (Methanococcus jannaschii), this protein is Large ribosomal subunit protein eL40.